A 500-amino-acid chain; its full sequence is uncharacterized protein (500 aa).

Residues 27–47 (IFALILIVFGFIIAPLLPGIF) form a helical membrane-spanning segment.

Its subcellular location is the membrane. This is an uncharacterized protein from Borreliella burgdorferi (strain ATCC 35210 / DSM 4680 / CIP 102532 / B31) (Borrelia burgdorferi).